The chain runs to 404 residues: Protein translocase subunit SecD (404 aa).

6 consecutive transmembrane segments (helical) span residues 7–27, 239–259, 262–282, 283–303, 330–350, and 357–377; these read HYIW…FNKV, LIAL…PGIV, IALL…GAAL, TLPG…SNVI, FPAI…LFFL, and GFAV…VFVS.

Belongs to the SecD/SecF family. SecD subfamily. Forms a complex with SecF. Part of the essential Sec protein translocation apparatus which comprises SecA, SecYEG and auxiliary proteins SecDF. Other proteins may also be involved.

It localises to the cell inner membrane. In terms of biological role, part of the Sec protein translocase complex. Interacts with the SecYEG preprotein conducting channel. SecDF uses the proton motive force (PMF) to complete protein translocation after the ATP-dependent function of SecA. In Leptotrichia buccalis (strain ATCC 14201 / DSM 1135 / JCM 12969 / NCTC 10249 / C-1013-b), this protein is Protein translocase subunit SecD.